A 505-amino-acid chain; its full sequence is Midnolin (505 aa).

One can recognise a Ubiquitin-like domain in the interval 32–106; it reads MSLAIHSTTG…LTLVPTVEAG (75 aa). Disordered stretches follow at residues 155–176, 228–305, and 440–485; these read PWHR…VSDF, SIAT…SRKP, and RLRR…GLDF. The span at 238-262 shows a compositional bias: low complexity; the sequence is RPVSSAARVPPVSSSPSSPVSPSPV. Positions 263–282 are enriched in polar residues; the sequence is TAGTFQSHAASTTCPEQTDC. Residues 283-300 show a composition bias toward low complexity; sequence SPPASSNTTSTPGSSPTP.

Interacts with GCK; the interaction occurs preferentially at low glucose levels. Interacts with the proteasome.

The protein localises to the nucleus. Its subcellular location is the cytoplasm. It localises to the cytosol. The protein resides in the nucleolus. Functionally, facilitates the ubiquitin-independent proteasomal degradation of stimulus-induced transcription factors such as FOSB, EGR1, NR4A1, and IRF4 to the proteasome for degradation. Promotes also the degradation of other substrates such as CBX4. Plays a role in inhibiting the activity of glucokinase GCK and both glucose-induced and basal insulin secretion. In Rattus norvegicus (Rat), this protein is Midnolin.